The sequence spans 100 residues: Large ribosomal subunit protein eL30 (100 aa).

The protein belongs to the eukaryotic ribosomal protein eL30 family.

This is Large ribosomal subunit protein eL30 from Thermococcus sibiricus (strain DSM 12597 / MM 739).